The sequence spans 1512 residues: METKVGKQKKRSVDSNDDVSKERRPKRAAACRNFKEKPLRISDKSETVEAKKEQNVVEEIVAIQLTSSLESNDDPRPNRRLTDFVLHNSDGVPQPVEMLELGDIFLEGVVLPLGDDKNEEKGVRFQSFGRVENWNISGYEDGSPGIWISTALADYDCRKPASKYKKIYDYFFEKACACVEVFKSLSKNPDTSLDELLAAVARSMSGSKIFSSGGAIQEFVISQGEFIYNQLAGLDETAKNHETCFVENSVLVSLRDHESSKIHKALSNVALRIDESQLVKSDHLVDGAEAEDVRYAKLIQEEEYRISMERSRNKRSSTTSASNKFYIKINEHEIANDYPLPSYYKNTKEETDELLLFEPGYEVDTRDLPCRTLHNWALYNSDSRMISLEVLPMRPCAEIDVTVFGSGVVAEDDGSGFCLDDSESSTSTQSNVHDGMNIFLSQIKEWMIEFGAEMIFVTLRTDMAWYRLGKPSKQYAPWFETVMKTVRVAISIFNMLMRESRVAKLSYANVIKRLCGLEENDKAYISSKLLDVERYVVVHGQIILQLFEEYPDKDIKRCPFVTGLASKMQDIHHTKWIIKRKKKILQKGKNLNPRAGLAHVVTRMKPMQATTTRLVNRIWGEFYSIYSPEVPSEAIHEVEEEEIEEDEEEDENEEDDIEEEAVEVQKSHTPKKSRGNSEDMEIKWNGEILGETSDGEPLYGRALVGGETVAVGSAVILEVDDPDETPAIYFVEFMFESSDQCKMLHGKLLQRGSETVIGTAANERELFLTNECLTVHLKDIKGTVSLDIRSRPWGHQYRKENLVVDKLDRARAEERKANGLPTEYYCKSLYSPERGGFFSLPRNDIGLGSGFCSSCKIKEEEEERSKTKLNISKTGVFSNGIEYYNGDFVYVLPNYITKDGLKKGTSRRTTLKCGRNVGLKAFVVCQLLDVIVLEESRKASNASFQVKLTRFYRPEDISEEKAYASDIQELYYSHDTYILPPEALQGKCEVRKKNDMPLCREYPILDHIFFCEVFYDSSTGYLKQFPANMKLKFSTIKDETLLREKKGKGVETGTSSGILMKPDEVPKEMRLATLDIFAGCGGLSHGLEKAGVSNTKWAIEYEEPAGHAFKQNHPEATVFVDNCNVILRAIMEKCGDVDDCVSTVEAAELVAKLDENQKSTLPLPGQADFISGGPPCQGFSGMNRFSDGSWSKVQCEMILAFLSFADYFRPKYFLLENVKKFVTYNKGRTFQLTMASLLEIGYQVRFGILEAGTYGVSQPRKRVIIWAASPEEVLPEWPEPMHVFDNPGSKISLPRGLHYDTVRNTKFGAPFRSITVRDTIGDLPLVENGESKINKEYRTTPVSWFQKKIRGNMSVLTDHICKGLNELNLIRCKKIPKRPGADWRDLPDENVTLSNGLVEKLRPLALSKTAKNHNEWKGLYGRLDWQGNLPISITDPQPMGKVGMCFHPEQDRIITVRECARSQGFPDSYEFSGTTKHKHRQIGNAVPPPLAFALGRKLKEALYLKSSLQHQS.

Over residues 1 to 22 the composition is skewed to basic and acidic residues; it reads METKVGKQKKRSVDSNDDVSKE. 2 disordered regions span residues 1–35 and 634–678; these read METK…RNFK and AIHE…GNSE. Residues 638-662 are compositionally biased toward acidic residues; the sequence is VEEEEIEEDEEEDENEEDDIEEEAV. 2 consecutive BAH domains span residues 707–841 and 909–1026; these read ETVA…FSLP and TTLK…KQFP. The SAM-dependent MTase C5-type domain occupies 1071 to 1505; sequence LATLDIFAGC…RKLKEALYLK (435 aa). Cys-1176 is a catalytic residue.

This sequence belongs to the class I-like SAM-binding methyltransferase superfamily. C5-methyltransferase family. In terms of tissue distribution, expressed at low levels in vegetative and floral organs.

It localises to the nucleus. It carries out the reaction a 2'-deoxycytidine in DNA + S-adenosyl-L-methionine = a 5-methyl-2'-deoxycytidine in DNA + S-adenosyl-L-homocysteine + H(+). Maintains chromatin CpG methylation that plays a role in genomic imprinting, regulation of embryogenesis and seed viability. Required for proper patterns of CG DNA methylation in dividing cells. In Arabidopsis thaliana (Mouse-ear cress), this protein is DNA (cytosine-5)-methyltransferase 2 (MET2).